A 221-amino-acid chain; its full sequence is GTP cyclohydrolase III (221 aa).

It belongs to the archaeal-type GTP cyclohydrolase family.

The catalysed reaction is GTP + 3 H2O = 2-amino-5-formylamino-6-(5-phospho-D-ribosylamino)pyrimidin-4(3H)-one + 2 phosphate + 2 H(+). In terms of biological role, catalyzes the formation of 2-amino-5-formylamino-6-ribofuranosylamino-4(3H)-pyrimidinone ribonucleotide monophosphate and inorganic phosphate from GTP. Also has an independent pyrophosphate phosphohydrolase activity. The chain is GTP cyclohydrolase III from Pyrobaculum arsenaticum (strain DSM 13514 / JCM 11321 / PZ6).